The primary structure comprises 307 residues: MVTATHPHSLGKLSRIRHLARQYAALTKPRVTQLAVFCAIIGMFLATPGMVPWRVLIGGAAGIWLLAGAAFAINCLVEQKIDALMRRTAWRPSATGEITTPQTLVFSAILGGAGMWLLHVYANDLTMWLTFATFLGYAVVYTILLKPATPQNIVIGGLSGAMPPALGWAAVAGEVPAEAWFLVLIIFTWTPPHFWALALYRRADYAKSGLPMLPVTHGERYTLLHILLYTLIMIAATLLPFVYGMSGYIYLAAALALGAGFLAYAWKMYRNYSDELAQRAFRFSILYLSLLFAALLVDHYFKFVPQV.

9 helical membrane passes run 31-51, 55-75, 103-123, 125-145, 153-173, 179-199, 223-243, 246-266, and 285-305; these read VTQLAVFCAIIGMFLATPGMV, VLIGGAAGIWLLAGAAFAINC, TLVFSAILGGAGMWLLHVYAN, LTMWLTFATFLGYAVVYTILL, IVIGGLSGAMPPALGWAAVAG, AWFLVLIIFTWTPPHFWALAL, LLHILLYTLIMIAATLLPFVY, SGYIYLAAALALGAGFLAYAW, and ILYLSLLFAALLVDHYFKFVP.

Belongs to the UbiA prenyltransferase family. Protoheme IX farnesyltransferase subfamily.

It localises to the cell inner membrane. It carries out the reaction heme b + (2E,6E)-farnesyl diphosphate + H2O = Fe(II)-heme o + diphosphate. The protein operates within porphyrin-containing compound metabolism; heme O biosynthesis; heme O from protoheme: step 1/1. Converts heme B (protoheme IX) to heme O by substitution of the vinyl group on carbon 2 of heme B porphyrin ring with a hydroxyethyl farnesyl side group. The protein is Protoheme IX farnesyltransferase of Cupriavidus necator (strain ATCC 17699 / DSM 428 / KCTC 22496 / NCIMB 10442 / H16 / Stanier 337) (Ralstonia eutropha).